Consider the following 1100-residue polypeptide: Conjugal transfer protein TraA (1100 aa).

Position 404-411 (404-411 (GRAGAGKT)) interacts with ATP.

The protein belongs to the MobA/MobL family.

The sequence is that of Conjugal transfer protein TraA (traA) from Agrobacterium fabrum (strain C58 / ATCC 33970) (Agrobacterium tumefaciens (strain C58)).